Consider the following 229-residue polypeptide: Cytidylate kinase (229 aa).

12–20 lines the ATP pocket; it reads GPSGVGKST.

It belongs to the cytidylate kinase family. Type 1 subfamily.

Its subcellular location is the cytoplasm. It catalyses the reaction CMP + ATP = CDP + ADP. The catalysed reaction is dCMP + ATP = dCDP + ADP. The polypeptide is Cytidylate kinase (Mesomycoplasma hyopneumoniae (strain 232) (Mycoplasma hyopneumoniae)).